The sequence spans 124 residues: Small ribosomal subunit protein uS12 (124 aa).

Position 89 is a 3-methylthioaspartic acid (Asp89).

This sequence belongs to the universal ribosomal protein uS12 family. In terms of assembly, part of the 30S ribosomal subunit. Contacts proteins S8 and S17. May interact with IF1 in the 30S initiation complex.

Functionally, with S4 and S5 plays an important role in translational accuracy. In terms of biological role, interacts with and stabilizes bases of the 16S rRNA that are involved in tRNA selection in the A site and with the mRNA backbone. Located at the interface of the 30S and 50S subunits, it traverses the body of the 30S subunit contacting proteins on the other side and probably holding the rRNA structure together. The combined cluster of proteins S8, S12 and S17 appears to hold together the shoulder and platform of the 30S subunit. In Buchnera aphidicola subsp. Cinara cedri (strain Cc), this protein is Small ribosomal subunit protein uS12.